The following is a 154-amino-acid chain: Prefoldin subunit 2 (154 aa).

Positions 124–139 are enriched in basic and acidic residues; sequence IRLMGEDEKPAAKENS. The segment at 124-154 is disordered; it reads IRLMGEDEKPAAKENSEGAGAKASSAGVLVS. A compositionally biased stretch (low complexity) spans 140-154; it reads EGAGAKASSAGVLVS.

It belongs to the prefoldin subunit beta family. As to quaternary structure, heterohexamer of two PFD-alpha type and four PFD-beta type subunits. Component of the PAQosome complex which is responsible for the biogenesis of several protein complexes and which consists of R2TP complex members RUVBL1, RUVBL2, RPAP3 and PIH1D1, URI complex members PFDN2, PFDN6, PDRG1, UXT and URI1 as well as ASDURF, POLR2E and DNAAF10/WDR92. Interacts with URI1; the interaction is phosphorylation-dependent and occurs in a growth-dependent manner.

The protein resides in the nucleus. Its subcellular location is the cytoplasm. It is found in the mitochondrion. Functionally, binds specifically to cytosolic chaperonin (c-CPN) and transfers target proteins to it. Binds to nascent polypeptide chain and promotes folding in an environment in which there are many competing pathways for nonnative proteins. In Homo sapiens (Human), this protein is Prefoldin subunit 2 (PFDN2).